We begin with the raw amino-acid sequence, 32 residues long: Conotoxin sr7a (32 aa).

3 disulfides stabilise this stretch: Cys1–Cys17, Cys8–Cys21, and Cys16–Cys31. Ser32 carries the post-translational modification Serine amide.

Expressed by the venom duct.

It localises to the secreted. In terms of biological role, elicits hyperactivity when injected intracranially into mice and produces paralysis when injected into the pedal muscle of freshwater snails, Pomacea paludosa, but it has no apparent effect after intramuscular injection into the limpet Patella opea or the freshwater fish Lebistes reticulatus. This chain is Conotoxin sr7a, found in Conus spurius (Alphabet cone).